The sequence spans 287 residues: Succinate dehydrogenase [ubiquinone] iron-sulfur subunit, mitochondrial (287 aa).

A mitochondrion-targeting transit peptide spans methionine 1–tyrosine 23. One can recognise a 2Fe-2S ferredoxin-type domain in the interval phenylalanine 51–proline 140. Cysteine 101, cysteine 106, cysteine 109, and cysteine 121 together coordinate [2Fe-2S] cluster. Positions asparagine 186 to aspartate 216 constitute a 4Fe-4S ferredoxin-type domain. [4Fe-4S] cluster is bound by residues cysteine 196, cysteine 199, and cysteine 202. Cysteine 206 is a [3Fe-4S] cluster binding site. Tryptophan 211 contacts a ubiquinone. [3Fe-4S] cluster contacts are provided by cysteine 257 and cysteine 263. [4Fe-4S] cluster is bound at residue cysteine 267.

Belongs to the succinate dehydrogenase/fumarate reductase iron-sulfur protein family. As to quaternary structure, component of complex II composed of four subunits: the flavoprotein (FP) SDHA, iron-sulfur protein (IP) SDHB, and a cytochrome b composed of a large and a small subunit. [2Fe-2S] cluster serves as cofactor. [3Fe-4S] cluster is required as a cofactor. Requires [4Fe-4S] cluster as cofactor.

The protein resides in the mitochondrion inner membrane. It catalyses the reaction a quinone + succinate = fumarate + a quinol. Its pathway is carbohydrate metabolism; tricarboxylic acid cycle; fumarate from succinate (eukaryal route): step 1/1. In terms of biological role, iron-sulfur protein (IP) subunit of succinate dehydrogenase (SDH) that is involved in complex II of the mitochondrial electron transport chain and is responsible for transferring electrons from succinate to ubiquinone (coenzyme Q). This is Succinate dehydrogenase [ubiquinone] iron-sulfur subunit, mitochondrial (sdhB) from Dictyostelium discoideum (Social amoeba).